We begin with the raw amino-acid sequence, 107 residues long: UPF0473 protein llmg_0152 (107 aa).

It belongs to the UPF0473 family.

In Lactococcus lactis subsp. cremoris (strain MG1363), this protein is UPF0473 protein llmg_0152.